Consider the following 336-residue polypeptide: MASAANSSREQLRKFLNKECLWVLSDASTPQMKVYTATTAVSAVYVPQIAGPPKTYMNVTLIVLKPKKKPTYVTVYINGTLATVARPEVLFTKAVQGPHSLTLMYFGVFSDAVGEAVPVEIRGNPVVTCTDLTTAHVFTTSTAVKTVEELQDITPSEIIPLGRGGAWYAEGALYMFFVNMDMLMCCPNMPTFPSLTHFINLLTRCDNGECVTCYGAGAHVNILRGWTEDDSPGTSGTCPCLLPCTALNNDYVPITGHRALLGLMFKPEDAPFVVGLRFNPPKMHPDMSRVLQGVLANGKEVPCTAQPWTLLRFSDLYSRAMLYNCQVLKRQVLHSY.

The interaction with host BBLF1 stretch occupies residues 67-69 (KKK).

It belongs to the herpesviridae cytoplasmic envelopment protein 2 family. In terms of assembly, homodimer. Interacts with BBLF1. Interacts with the capsid. Interacts with BKRF4 (via C-terminus); this interaction is important for infectious virion production. Interacts with host TYK2; this interaction participates to the inhibition of host type I IFN signaling. Interacts with host STAT1; this interaction leads to STAT1 dephosphorylation and inhibition. Interacts with host STAT2; this interaction leads to STAT2 degradation. Interacts with host CUL1; this interaction might facilitate CUL1 recruitment to STAT2, leading to ubiquitination and degradation of the latter. Interacts with host AGO2; this interaction participates to the host miRNA regulation leading to enhanced SUMOylation.

It localises to the virion tegument. Its subcellular location is the host cytoplasm. The protein localises to the host nucleus. It is found in the host Golgi apparatus. The protein resides in the host trans-Golgi network. Plays a critical role in cytoplasmic virus egress. Participates in the final step of tegumentation and envelope acquisition within the host cytoplasm by directly interacting with the capsid. Upon virion binding to target cell, a signaling cascade is triggered to disrupt the interaction with the capsid, thereby preparing capsid uncoating. Activates the AP-1 pathway and enhances EBV reactivation and virus release. Inhibits type I IFN-induced TYK2, STAT1 and STAT3 phosphorylation, thereby impairing type I IFN signaling and counteracting the ability of IFN-alpha to suppress the reactivation of EBV. Recruits SHP1 phosphatase to dephosphorylate STAT1. Mediates STAT2 ubiquitination and proteasomal degradation. Also suppresses type II and type III IFN signaling. Contributes to G1/S arrest in the host cell. Acts as an miRNA regulator that interferes with the function of RISC in miRNA-mediated mRNA silencing. As a result, SUMOylation is increased. When encapsulated in the exosomes released by EBV-infected host cells, may facilitate the infection in recipient cells. This is Cytoplasmic envelopment protein 2 from Epstein-Barr virus (strain AG876) (HHV-4).